The chain runs to 55 residues: ATP synthase small subunit 6, mitochondrial (55 aa).

Residues 1 to 15 constitute a mitochondrion transit peptide; that stretch reads MRQFDPWPVFFRREW. A helical membrane pass occupies residues 20-39; sequence PFLVGFAVTGAIITKMSLGF.

The protein belongs to the ATPase 6 subunit family.

The protein resides in the mitochondrion inner membrane. In terms of biological role, mitochondrial membrane ATP synthase (F(1)F(0) ATP synthase or Complex V) produces ATP from ADP in the presence of a proton gradient across the membrane which is generated by electron transport complexes of the respiratory chain. F-type ATPases consist of two structural domains, F(1) - containing the extramembraneous catalytic core and F(0) - containing the membrane proton channel, linked together by a central stalk and a peripheral stalk. During catalysis, ATP synthesis in the catalytic domain of F(1) is coupled via a rotary mechanism of the central stalk subunits to proton translocation. Part of the complex F(0) domain. Confers tolerance to several abiotic stresses (e.g. salt, mannitol, drought, oxidative and cold stresses), probably by providing additional energy needed for cell homeostasis. The sequence is that of ATP synthase small subunit 6, mitochondrial from Solanum tuberosum (Potato).